The sequence spans 224 residues: Probable Brix domain-containing ribosomal biogenesis protein (224 aa).

In terms of domain architecture, Brix spans 1-196 (MMLITTSHRP…IWIMEDGRRW (196 aa)).

Its function is as follows. Probably involved in the biogenesis of the ribosome. This Pyrococcus horikoshii (strain ATCC 700860 / DSM 12428 / JCM 9974 / NBRC 100139 / OT-3) protein is Probable Brix domain-containing ribosomal biogenesis protein.